Here is a 509-residue protein sequence, read N- to C-terminus: MEEIQRYFQLERSHQHDFLYPLIFQEYIYTFAHDRGCNRSILSENPCYENKSSLLIVKRLITRMCQQNHFLISSNDFNQNPFWGRNKNFDFQIISEGFALIVEIPFSLRLRASLEEKKIVTFQNLRSIQAIFPFLEDSFSHLNFVLDISIPHSIHLEILVQTLRYWVKDASSLHLLRFFLNEYCNSNSLITPKKVSSSFSKRNQRFFLFLYNSHVCEYESIFVFLRKQSSHLRSTSSGLLLERIYFYAKMERLVNLFVKVKDFQVNLWLVKEPCMHYVRYQRKSILASKGVSLLINKWKSYLVAFWQWHFSMWFHPRRISINQLSNHSLEFLGYLSSVRMNPSVVRSQILENSFLINNALKKFDTLVPINPLIASLAKAKFCNVLGHPISKPVWADFSDLNIIDRFGHISRNISHYYSGSSXKNSLYRIKYILRLSCARTLARKHKSTVRVFLKRLGSELLEEFLMSEEDVLSLTFPKASSTFWGVYRSRIWYLDIISINDLANHKSKF.

This sequence belongs to the intron maturase 2 family. MatK subfamily.

The protein resides in the plastid. It localises to the chloroplast. Functionally, usually encoded in the trnK tRNA gene intron. Probably assists in splicing its own and other chloroplast group II introns. The protein is Maturase K of Otacanthus azureus (Brazilian snapdragon).